We begin with the raw amino-acid sequence, 179 residues long: Cytochrome b6-f complex iron-sulfur subunit (179 aa).

The helical transmembrane segment at 20-42 (LLTFGTITGVAAGALYPIVKYFI) threads the bilayer. The region spanning 60 to 161 (GNDVIVSQFL…ANVTDNDKVV (102 aa)) is the Rieske domain. Residues C107, H109, C125, and H128 each contribute to the [2Fe-2S] cluster site. Cysteines 112 and 127 form a disulfide.

It belongs to the Rieske iron-sulfur protein family. As to quaternary structure, the 4 large subunits of the cytochrome b6-f complex are cytochrome b6, subunit IV (17 kDa polypeptide, PetD), cytochrome f and the Rieske protein, while the 4 small subunits are PetG, PetL, PetM and PetN. The complex functions as a dimer. It depends on [2Fe-2S] cluster as a cofactor.

The protein localises to the cellular thylakoid membrane. The enzyme catalyses 2 oxidized [plastocyanin] + a plastoquinol + 2 H(+)(in) = 2 reduced [plastocyanin] + a plastoquinone + 4 H(+)(out). In terms of biological role, component of the cytochrome b6-f complex, which mediates electron transfer between photosystem II (PSII) and photosystem I (PSI), cyclic electron flow around PSI, and state transitions. This chain is Cytochrome b6-f complex iron-sulfur subunit, found in Microcystis aeruginosa (strain NIES-843 / IAM M-2473).